Reading from the N-terminus, the 199-residue chain is NAD(P)H dehydrogenase (quinone) (199 aa).

Positions 4-190 (VLVLYYSAYG…AGARYQGQVI (187 aa)) constitute a Flavodoxin-like domain. Residues 10–15 (SAYGHI) and 78–80 (TRF) contribute to the FMN site. Tyr12 contacts NAD(+). A substrate-binding site is contributed by Trp98. FMN is bound by residues 113 to 119 (STATQHG) and His134.

This sequence belongs to the WrbA family. FMN serves as cofactor.

It catalyses the reaction a quinone + NADH + H(+) = a quinol + NAD(+). The catalysed reaction is a quinone + NADPH + H(+) = a quinol + NADP(+). In Rhodopseudomonas palustris (strain BisA53), this protein is NAD(P)H dehydrogenase (quinone).